The sequence spans 707 residues: tRNA 5-methylaminomethyl-2-thiouridine biosynthesis bifunctional protein MnmC (707 aa).

The tRNA (mnm(5)s(2)U34)-methyltransferase stretch occupies residues Met1–Glu264. The FAD-dependent cmnm(5)s(2)U34 oxidoreductase stretch occupies residues Ile312–Ile707.

This sequence in the N-terminal section; belongs to the methyltransferase superfamily. tRNA (mnm(5)s(2)U34)-methyltransferase family. In the C-terminal section; belongs to the DAO family. FAD serves as cofactor.

It localises to the cytoplasm. The enzyme catalyses 5-aminomethyl-2-thiouridine(34) in tRNA + S-adenosyl-L-methionine = 5-methylaminomethyl-2-thiouridine(34) in tRNA + S-adenosyl-L-homocysteine + H(+). Functionally, catalyzes the last two steps in the biosynthesis of 5-methylaminomethyl-2-thiouridine (mnm(5)s(2)U) at the wobble position (U34) in tRNA. Catalyzes the FAD-dependent demodification of cmnm(5)s(2)U34 to nm(5)s(2)U34, followed by the transfer of a methyl group from S-adenosyl-L-methionine to nm(5)s(2)U34, to form mnm(5)s(2)U34. The polypeptide is tRNA 5-methylaminomethyl-2-thiouridine biosynthesis bifunctional protein MnmC (Saccharophagus degradans (strain 2-40 / ATCC 43961 / DSM 17024)).